The sequence spans 95 residues: Aspartyl/glutamyl-tRNA(Asn/Gln) amidotransferase subunit C (95 aa).

It belongs to the GatC family. Heterotrimer of A, B and C subunits.

It catalyses the reaction L-glutamyl-tRNA(Gln) + L-glutamine + ATP + H2O = L-glutaminyl-tRNA(Gln) + L-glutamate + ADP + phosphate + H(+). It carries out the reaction L-aspartyl-tRNA(Asn) + L-glutamine + ATP + H2O = L-asparaginyl-tRNA(Asn) + L-glutamate + ADP + phosphate + 2 H(+). Allows the formation of correctly charged Asn-tRNA(Asn) or Gln-tRNA(Gln) through the transamidation of misacylated Asp-tRNA(Asn) or Glu-tRNA(Gln) in organisms which lack either or both of asparaginyl-tRNA or glutaminyl-tRNA synthetases. The reaction takes place in the presence of glutamine and ATP through an activated phospho-Asp-tRNA(Asn) or phospho-Glu-tRNA(Gln). This Dehalococcoides mccartyi (strain CBDB1) protein is Aspartyl/glutamyl-tRNA(Asn/Gln) amidotransferase subunit C.